Here is a 113-residue protein sequence, read N- to C-terminus: Ribosome-binding factor A (113 aa).

Belongs to the RbfA family. In terms of assembly, monomer. Binds 30S ribosomal subunits, but not 50S ribosomal subunits or 70S ribosomes.

The protein resides in the cytoplasm. In terms of biological role, one of several proteins that assist in the late maturation steps of the functional core of the 30S ribosomal subunit. Associates with free 30S ribosomal subunits (but not with 30S subunits that are part of 70S ribosomes or polysomes). Required for efficient processing of 16S rRNA. May interact with the 5'-terminal helix region of 16S rRNA. The protein is Ribosome-binding factor A of Oceanobacillus iheyensis (strain DSM 14371 / CIP 107618 / JCM 11309 / KCTC 3954 / HTE831).